The following is a 379-amino-acid chain: Carbamoyl phosphate synthase small chain (379 aa).

The CPSase stretch occupies residues 1–189; it reads MSKSALLVLE…GLPEAKADSE (189 aa). Residues Ser-47, Gly-241, and Gly-243 each contribute to the L-glutamine site. The region spanning 193-379 is the Glutamine amidotransferase type-1 domain; the sequence is HVVAYDFGAK…FIELIKQFRA (187 aa). Cys-269 (nucleophile) is an active-site residue. Leu-270, Gln-273, Asn-311, Gly-313, and Phe-314 together coordinate L-glutamine. Residues His-353 and Glu-355 contribute to the active site.

The protein belongs to the CarA family. Composed of two chains; the small (or glutamine) chain promotes the hydrolysis of glutamine to ammonia, which is used by the large (or ammonia) chain to synthesize carbamoyl phosphate. Tetramer of heterodimers (alpha,beta)4.

It carries out the reaction hydrogencarbonate + L-glutamine + 2 ATP + H2O = carbamoyl phosphate + L-glutamate + 2 ADP + phosphate + 2 H(+). It catalyses the reaction L-glutamine + H2O = L-glutamate + NH4(+). It participates in amino-acid biosynthesis; L-arginine biosynthesis; carbamoyl phosphate from bicarbonate: step 1/1. It functions in the pathway pyrimidine metabolism; UMP biosynthesis via de novo pathway; (S)-dihydroorotate from bicarbonate: step 1/3. Functionally, small subunit of the glutamine-dependent carbamoyl phosphate synthetase (CPSase). CPSase catalyzes the formation of carbamoyl phosphate from the ammonia moiety of glutamine, carbonate, and phosphate donated by ATP, constituting the first step of 2 biosynthetic pathways, one leading to arginine and/or urea and the other to pyrimidine nucleotides. The small subunit (glutamine amidotransferase) binds and cleaves glutamine to supply the large subunit with the substrate ammonia. This chain is Carbamoyl phosphate synthase small chain, found in Vibrio cholerae serotype O1 (strain ATCC 39315 / El Tor Inaba N16961).